The sequence spans 260 residues: Indole-3-glycerol phosphate synthase (260 aa).

Belongs to the TrpC family.

It carries out the reaction 1-(2-carboxyphenylamino)-1-deoxy-D-ribulose 5-phosphate + H(+) = (1S,2R)-1-C-(indol-3-yl)glycerol 3-phosphate + CO2 + H2O. It functions in the pathway amino-acid biosynthesis; L-tryptophan biosynthesis; L-tryptophan from chorismate: step 4/5. This is Indole-3-glycerol phosphate synthase from Staphylococcus aureus (strain MRSA252).